Reading from the N-terminus, the 222-residue chain is MIKLLLTDLDGTLTEDRGTYVVDIGAIKALRRAEKAGIRVALVSGNSYPVLRGLHNYLGLSGGLVAENGCFVFHGGVTFRVCETVPREVVSEFAKTFNLRESWQNEFRRSDFGFTPAELKDEMIKWAEERGLVVQSSGYALHLSGKPGGKGAGVRKLLELANVKREETGAIGDSRTDIEMFREAGITAAVSNADPELKRVASISLKLKSGAGVMEFIDMLLS.

Residue Asp8 is the Nucleophile of the active site. The Mg(2+) site is built by Asp8 and Asp10. Lys150 serves as a coordination point for substrate. Residues Asp173 and Asp177 each contribute to the Mg(2+) site.

This sequence belongs to the archaeal SPP-like hydrolase family. Mg(2+) serves as cofactor.

It carries out the reaction 2-phosphoglycolate + H2O = glycolate + phosphate. In terms of biological role, catalyzes the dephosphorylation of 2-phosphoglycolate. The chain is Phosphoglycolate phosphatase from Metallosphaera sedula (strain ATCC 51363 / DSM 5348 / JCM 9185 / NBRC 15509 / TH2).